A 66-amino-acid chain; its full sequence is Large ribosomal subunit protein bL33c (66 aa).

Belongs to the bacterial ribosomal protein bL33 family.

The protein localises to the plastid. The protein resides in the chloroplast. In Saccharum officinarum (Sugarcane), this protein is Large ribosomal subunit protein bL33c.